A 578-amino-acid polypeptide reads, in one-letter code: Membrane protein insertase YidC (578 aa).

A helical membrane pass occupies residues 3–23 (IQRSILIVALAVVSYLLVLQW). Residues 34-72 (AASASMNTTQGLPDTPSASGTSSDVPTAQSSAAGSEAAD) form a disordered region. The segment covering 37 to 66 (ASMNTTQGLPDTPSASGTSSDVPTAQSSAA) has biased composition (polar residues). 5 helical membrane-spanning segments follow: residues 361-381 (LELTVDYGFLWFIAQPIFWLL), 387-407 (LIGNWGWSIIALTVLIKLAFF), 457-477 (LGGCLPILVQMPVFLSLYWVL), 500-520 (PFFILPIVMGGTMLIQQMLNP), and 535-555 (PIIFTFFFLWFPAGLVLYWVV).

Belongs to the OXA1/ALB3/YidC family. Type 1 subfamily. In terms of assembly, interacts with the Sec translocase complex via SecD. Specifically interacts with transmembrane segments of nascent integral membrane proteins during membrane integration.

The protein resides in the cell inner membrane. Its function is as follows. Required for the insertion and/or proper folding and/or complex formation of integral membrane proteins into the membrane. Involved in integration of membrane proteins that insert both dependently and independently of the Sec translocase complex, as well as at least some lipoproteins. Aids folding of multispanning membrane proteins. The polypeptide is Membrane protein insertase YidC (Pseudomonas aeruginosa (strain ATCC 15692 / DSM 22644 / CIP 104116 / JCM 14847 / LMG 12228 / 1C / PRS 101 / PAO1)).